A 489-amino-acid polypeptide reads, in one-letter code: Cysteine--tRNA ligase (489 aa).

Cys27 serves as a coordination point for Zn(2+). A 'HIGH' region motif is present at residues Val29–His39. Zn(2+) contacts are provided by Cys211, His236, and Glu240. The 'KMSKS' region signature appears at Lys268–Ser272. Lys271 lines the ATP pocket.

Belongs to the class-I aminoacyl-tRNA synthetase family. As to quaternary structure, monomer. Zn(2+) is required as a cofactor.

The protein localises to the cytoplasm. It carries out the reaction tRNA(Cys) + L-cysteine + ATP = L-cysteinyl-tRNA(Cys) + AMP + diphosphate. The chain is Cysteine--tRNA ligase from Prochlorococcus marinus (strain MIT 9312).